A 413-amino-acid chain; its full sequence is Gamma-glutamyl phosphate reductase (413 aa).

This sequence belongs to the gamma-glutamyl phosphate reductase family.

The protein localises to the cytoplasm. The enzyme catalyses L-glutamate 5-semialdehyde + phosphate + NADP(+) = L-glutamyl 5-phosphate + NADPH + H(+). It functions in the pathway amino-acid biosynthesis; L-proline biosynthesis; L-glutamate 5-semialdehyde from L-glutamate: step 2/2. Catalyzes the NADPH-dependent reduction of L-glutamate 5-phosphate into L-glutamate 5-semialdehyde and phosphate. The product spontaneously undergoes cyclization to form 1-pyrroline-5-carboxylate. The chain is Gamma-glutamyl phosphate reductase from Leuconostoc mesenteroides subsp. mesenteroides (strain ATCC 8293 / DSM 20343 / BCRC 11652 / CCM 1803 / JCM 6124 / NCDO 523 / NBRC 100496 / NCIMB 8023 / NCTC 12954 / NRRL B-1118 / 37Y).